The primary structure comprises 1002 residues: DNA-directed RNA polymerase 1, mitochondrial (1002 aa).

The transit peptide at 1–21 (MWRYISKQAYSRKFRNSHDSA) directs the protein to the mitochondrion. Active-site residues include D703, K778, and D935.

This sequence belongs to the phage and mitochondrial RNA polymerase family. In terms of tissue distribution, the highest levels of expression are detected in the mature leaves. The level of expression is lowest in the cotyledons.

The protein resides in the mitochondrion. The catalysed reaction is RNA(n) + a ribonucleoside 5'-triphosphate = RNA(n+1) + diphosphate. DNA-dependent RNA polymerase catalyzes the transcription of DNA into RNA using the four ribonucleoside triphosphates as substrates. This Nicotiana sylvestris (Wood tobacco) protein is DNA-directed RNA polymerase 1, mitochondrial (RPOT1).